Here is a 316-residue protein sequence, read N- to C-terminus: Biotin synthase (316 aa).

The region spanning 36-264 is the Radical SAM core domain; that stretch reads TEIQISTLLS…ASRVRLAAGR (229 aa). [4Fe-4S] cluster is bound by residues C51, C55, and C58. 4 residues coordinate [2Fe-2S] cluster: C96, C127, C187, and R259.

It belongs to the radical SAM superfamily. Biotin synthase family. As to quaternary structure, homodimer. Requires [4Fe-4S] cluster as cofactor. The cofactor is [2Fe-2S] cluster.

It carries out the reaction (4R,5S)-dethiobiotin + (sulfur carrier)-SH + 2 reduced [2Fe-2S]-[ferredoxin] + 2 S-adenosyl-L-methionine = (sulfur carrier)-H + biotin + 2 5'-deoxyadenosine + 2 L-methionine + 2 oxidized [2Fe-2S]-[ferredoxin]. It participates in cofactor biosynthesis; biotin biosynthesis; biotin from 7,8-diaminononanoate: step 2/2. In terms of biological role, catalyzes the conversion of dethiobiotin (DTB) to biotin by the insertion of a sulfur atom into dethiobiotin via a radical-based mechanism. The polypeptide is Biotin synthase (Gluconacetobacter diazotrophicus (strain ATCC 49037 / DSM 5601 / CCUG 37298 / CIP 103539 / LMG 7603 / PAl5)).